The following is a 152-amino-acid chain: Transcriptional regulator MraZ (152 aa).

2 SpoVT-AbrB domains span residues 5 to 52 and 81 to 124; these read VNQL…PLPE and AQEL…DESL.

Belongs to the MraZ family. As to quaternary structure, forms oligomers.

Its subcellular location is the cytoplasm. It is found in the nucleoid. The chain is Transcriptional regulator MraZ from Halorhodospira halophila (strain DSM 244 / SL1) (Ectothiorhodospira halophila (strain DSM 244 / SL1)).